We begin with the raw amino-acid sequence, 952 residues long: MTNPSEGTTPLAFRYTPELANKIEGEWQNYWTDNGTFNAPNPVGDLAPADGKALPEDKLFVQDMFPYPSGAGLHVGHPLGYIATDVFARYNRMLGKNVLHTLGYDAFGLPAEQYAIQTGTHPRTTTMANIENMKRQLGALGLGHDSRRAVATTDPEFYKWTQWIFLQIFNSWFDAEQQKARPISELIPLLESGELKTKDGADYNALGDVEKQKAVDDYRLVYRSNSTVNWCPGLGTVLANEEVTADGRSERGNFPVFRKNLSQWMMRITAYSDRLIDDLELLDWTEKVKSMQRNWIGRSRGAEVDFSAEGETVTVFTTRPDTLFGATYMVLAPEHELVDVLLEKAGSYEGVDARWTNGQASPAEAVAAYRASIAAKSDLERQENKEKTGVFLGVYATNPVNGDQITVFIADYVLTGYGTGAIMAVPAHDERDYEFATVLGLPIKEVVAGGNIEEAAFTESGEAVNSANDNGLDINGLAKDEAIAKTIEWLEEKELGRGTIQYKLRDWLFARQRYWGEPFPIVYDENGQAHALPDSMLPVELPEVEDYKPVSFDPEDADSEPSPPLAKAREWVEVELDLGDGKKKYTRDTNVMPQWAGSSWYQLRYVDPSNDEQFCNIENERYWTGPRPETHGPNDPGGVDLYVGGVEHAVLHLLYARFWHKVLFDLGHVSSKEPYRRLYNQGYIQAFAYTDSRGVYVPADDVEEKDGKFFYQGEEVNQEYGKMGKSLKNAVAPDDICNNFGADTLRVYEMAMGPLDTSRPWATKDVVGAQRFLQRLWRLVVDENTGEVLTRDEVLTDDDNKQLHRTIAGVRDDYTNLRVNTVVAKLIEYVNYLTKTYPDTIPAGAVLPLIVMVSPIAPHIAEELWKKLGHDDTVTYEPFPTFEEKWLTDDEIELPVQVNGKVRGRITVAADASQEQVIEAALADEKVQEQISGKNLIKQIVVPGRMVNLVVK.

The 'HIGH' region motif lies at 66–77; the sequence is PYPSGAGLHVGH. Positions 722–726 match the 'KMSKS' region motif; the sequence is KMGKS. Residue lysine 725 coordinates ATP.

Belongs to the class-I aminoacyl-tRNA synthetase family.

Its subcellular location is the cytoplasm. It carries out the reaction tRNA(Leu) + L-leucine + ATP = L-leucyl-tRNA(Leu) + AMP + diphosphate. This is Leucine--tRNA ligase from Corynebacterium glutamicum (strain ATCC 13032 / DSM 20300 / JCM 1318 / BCRC 11384 / CCUG 27702 / LMG 3730 / NBRC 12168 / NCIMB 10025 / NRRL B-2784 / 534).